The following is a 367-amino-acid chain: MTPEILPIEDYDDQLAEKTERLRGMMAPFNAPEPAVFRSPVSHYRMRAEFRIWHDGDELYHIMFDQQTKQRIRVDRFPAASELINRLMPEMLAAIQPDPVLRRKLFQIDYLSTLSGEVIVSLLYHRALNEEWQEHARALRDSLTAQGFNLQLIGRATKTKICLDRDYVDECLPVAGRNMIYRQVENSFTQPNAAVNIQMLEWALDATAGSKGDLLELYCGNGNFSLALARNFERVLATEIAKPSVAAAQYNIAANQIENVQIIRMAAEEFTQAMQGVRQFNRLQGIDLTSYQCETIFVDPPRSGLDDETVKLVQAYPRILYISCNPETLSNNLKTLSETHDIRRLALFDQFPYTHHMECGVLLEKRQ.

S-adenosyl-L-methionine-binding residues include Q190, Y218, N223, E239, and D299. The active-site Nucleophile is the C324. E358 serves as the catalytic Proton acceptor.

This sequence belongs to the class I-like SAM-binding methyltransferase superfamily. RNA M5U methyltransferase family. TrmA subfamily.

The catalysed reaction is uridine(54) in tRNA + S-adenosyl-L-methionine = 5-methyluridine(54) in tRNA + S-adenosyl-L-homocysteine + H(+). The enzyme catalyses uridine(341) in tmRNA + S-adenosyl-L-methionine = 5-methyluridine(341) in tmRNA + S-adenosyl-L-homocysteine + H(+). Functionally, dual-specificity methyltransferase that catalyzes the formation of 5-methyluridine at position 54 (m5U54) in all tRNAs, and that of position 341 (m5U341) in tmRNA (transfer-mRNA). The protein is tRNA/tmRNA (uracil-C(5))-methyltransferase of Pectobacterium atrosepticum (strain SCRI 1043 / ATCC BAA-672) (Erwinia carotovora subsp. atroseptica).